The following is a 447-amino-acid chain: Tubulin beta-2 chain (447 aa).

Glutamine 11, glutamate 69, serine 138, glycine 142, threonine 143, glycine 144, asparagine 204, and asparagine 226 together coordinate GTP. Glutamate 69 lines the Mg(2+) pocket. Residues 426–447 form a disordered region; it reads QDAGVDEEEEEYEEEAPLEEEV. Residues 429–447 are compositionally biased toward acidic residues; that stretch reads GVDEEEEEYEEEAPLEEEV.

The protein belongs to the tubulin family. As to quaternary structure, dimer of alpha and beta chains. A typical microtubule is a hollow water-filled tube with an outer diameter of 25 nm and an inner diameter of 15 nM. Alpha-beta heterodimers associate head-to-tail to form protofilaments running lengthwise along the microtubule wall with the beta-tubulin subunit facing the microtubule plus end conferring a structural polarity. Microtubules usually have 13 protofilaments but different protofilament numbers can be found in some organisms and specialized cells. Mg(2+) is required as a cofactor.

The protein resides in the cytoplasm. The protein localises to the cytoskeleton. Tubulin is the major constituent of microtubules, a cylinder consisting of laterally associated linear protofilaments composed of alpha- and beta-tubulin heterodimers. Microtubules grow by the addition of GTP-tubulin dimers to the microtubule end, where a stabilizing cap forms. Below the cap, tubulin dimers are in GDP-bound state, owing to GTPase activity of alpha-tubulin. This chain is Tubulin beta-2 chain (TUB2), found in Colletotrichum gloeosporioides (Anthracnose fungus).